A 301-amino-acid polypeptide reads, in one-letter code: Ribonuclease HIII (301 aa).

The RNase H type-2 domain maps to 90–301; sequence TPHIGIDESG…LDAILGKVGK (212 aa). Residues D96, E97, and D198 each contribute to the a divalent metal cation site.

It belongs to the RNase HII family. RnhC subfamily. Mn(2+) is required as a cofactor. It depends on Mg(2+) as a cofactor.

The protein resides in the cytoplasm. It catalyses the reaction Endonucleolytic cleavage to 5'-phosphomonoester.. In terms of biological role, endonuclease that specifically degrades the RNA of RNA-DNA hybrids. This chain is Ribonuclease HIII, found in Protochlamydia amoebophila (strain UWE25).